A 303-amino-acid polypeptide reads, in one-letter code: Sulfate adenylyltransferase subunit 2 (303 aa).

It belongs to the PAPS reductase family. CysD subfamily. As to quaternary structure, heterodimer composed of CysD, the smaller subunit, and CysN.

The catalysed reaction is sulfate + ATP + H(+) = adenosine 5'-phosphosulfate + diphosphate. It participates in sulfur metabolism; hydrogen sulfide biosynthesis; sulfite from sulfate: step 1/3. Functionally, with CysN forms the ATP sulfurylase (ATPS) that catalyzes the adenylation of sulfate producing adenosine 5'-phosphosulfate (APS) and diphosphate, the first enzymatic step in sulfur assimilation pathway. APS synthesis involves the formation of a high-energy phosphoric-sulfuric acid anhydride bond driven by GTP hydrolysis by CysN coupled to ATP hydrolysis by CysD. This is Sulfate adenylyltransferase subunit 2 from Akkermansia muciniphila (strain ATCC BAA-835 / DSM 22959 / JCM 33894 / BCRC 81048 / CCUG 64013 / CIP 107961 / Muc).